A 104-amino-acid chain; its full sequence is Guanyl-specific ribonuclease Ap1 (104 aa).

Disulfide bonds link Cys2/Cys10 and Cys6/Cys103. Residue His40 is part of the active site. Glu58 functions as the Proton acceptor in the catalytic mechanism. The active-site Proton donor is the His92.

Belongs to the ribonuclease N1/T1 family.

It localises to the secreted. It catalyses the reaction [RNA] containing guanosine + H2O = an [RNA fragment]-3'-guanosine-3'-phosphate + a 5'-hydroxy-ribonucleotide-3'-[RNA fragment].. This chain is Guanyl-specific ribonuclease Ap1, found in Aspergillus pallidus.